The chain runs to 31 residues: Zinc metalloproteinase alsophinase (31 aa).

A Pyrrolidone carboxylic acid modification is found at glutamine 1. Positions 9-31 constitute a Peptidase M12B domain; that stretch reads KYIEFYLVVDNGMFXKYSXXFTV. Glutamate 12 serves as a coordination point for Ca(2+).

Monomer. Requires Zn(2+) as cofactor. In terms of processing, contains 9 disulfide bonds. In terms of tissue distribution, expressed by the venom gland.

It localises to the secreted. With respect to regulation, inhibited by 1,10-phenanthroline. Snake venom zinc metalloprotease that has potent hemorrhagic activity, fibrinogenolytic activity on the alpha-subunit of human fibrinogen (FGA) in vitro and provokes necrosis in skin, muscle and lung tissues. May contribute to local edema and ecchymosis induced by venom. Hydrolyzes model substrate (beta-chain of insulin) at Ala(14)-Leu(15). The chain is Zinc metalloproteinase alsophinase from Borikenophis portoricensis (Puerto Rican racer).